We begin with the raw amino-acid sequence, 209 residues long: Ribosomal RNA large subunit methyltransferase E (209 aa).

Positions 63, 65, 83, 99, and 124 each coordinate S-adenosyl-L-methionine. Lysine 164 functions as the Proton acceptor in the catalytic mechanism.

Belongs to the class I-like SAM-binding methyltransferase superfamily. RNA methyltransferase RlmE family.

It localises to the cytoplasm. The catalysed reaction is uridine(2552) in 23S rRNA + S-adenosyl-L-methionine = 2'-O-methyluridine(2552) in 23S rRNA + S-adenosyl-L-homocysteine + H(+). Specifically methylates the uridine in position 2552 of 23S rRNA at the 2'-O position of the ribose in the fully assembled 50S ribosomal subunit. In Aliivibrio salmonicida (strain LFI1238) (Vibrio salmonicida (strain LFI1238)), this protein is Ribosomal RNA large subunit methyltransferase E.